The chain runs to 1463 residues: Clustered mitochondria protein homolog (1463 aa).

The disordered stretch occupies residues 1-79 (MAKNKKQNGK…ETEQQQQQQE (79 aa)). Positions 10 to 22 (KAKTPPVVAAAAG) are enriched in low complexity. The Clu domain maps to 374 to 616 (RAEDTFSSKL…RTFPPDVNFL (243 aa)). Disordered stretches follow at residues 684–753 (AQKT…SEDA), 942–988 (GDGQ…SVPS), and 1387–1463 (QKEA…RRKS). The span at 692–702 (KQAAIEAAAPA) shows a compositional bias: low complexity. The segment covering 703–731 (EGDKTPAKDAKDGKEAGKDANDGKEEGST) has biased composition (basic and acidic residues). A compositionally biased stretch (basic residues) spans 955 to 964 (GGKKQNKQSK). Residues 965–980 (RGGGGGGGKGAAGGGR) show a composition bias toward gly residues. Residues 1438–1456 (AEAASHTAGGAAANTAAPA) show a composition bias toward low complexity.

Belongs to the CLU family.

The protein localises to the cytoplasm. In terms of biological role, mRNA-binding protein involved in proper cytoplasmic distribution of mitochondria. The sequence is that of Clustered mitochondria protein homolog from Anopheles gambiae (African malaria mosquito).